Reading from the N-terminus, the 111-residue chain is Cell division protein FtsB (111 aa).

Residues 1 to 3 lie on the Cytoplasmic side of the membrane; the sequence is MRL. A helical membrane pass occupies residues 4–21; it reads ITLFLLLLLLAIQYPLWL. The Periplasmic segment spans residues 22-111; sequence GKGGWLRVWD…PAALQPNHRH (90 aa). The stretch at 28-64 forms a coiled coil; sequence RVWDMQKQVASQNQRNAELKQRNLKLEGEVKDLKEGT. The tract at residues 90–111 is disordered; sequence PAPKTSETPLPPPAALQPNHRH.

This sequence belongs to the FtsB family. As to quaternary structure, part of a complex composed of FtsB, FtsL and FtsQ.

Its subcellular location is the cell inner membrane. Essential cell division protein. May link together the upstream cell division proteins, which are predominantly cytoplasmic, with the downstream cell division proteins, which are predominantly periplasmic. The protein is Cell division protein FtsB of Ralstonia nicotianae (strain ATCC BAA-1114 / GMI1000) (Ralstonia solanacearum).